A 194-amino-acid chain; its full sequence is MQRVSRLKREMQLLTAEPPPGVSCWQSEGRLDELQAQIVGGANTPYEGGVFTLEINIPERYPFEPPKMRFLTPIYHPNIDNAGRICLDALKLPPKGAWRPSLNISTVLTSIQLLMAEPNPDDPLMADISSEFKYNKPLYLEKAKKWTAEHAIQKNKGCVETDGKTPENKNLKTSHKREALSAQENLEHTKKVCL.

In terms of domain architecture, UBC core spans 2-152 (QRVSRLKREM…AKKWTAEHAI (151 aa)). Cys-86 (glycyl thioester intermediate) is an active-site residue. 2 stretches are compositionally biased toward basic and acidic residues: residues 158-170 (CVETDGKTPENKN) and 185-194 (NLEHTKKVCL). Positions 158–194 (CVETDGKTPENKNLKTSHKREALSAQENLEHTKKVCL) are disordered.

It belongs to the ubiquitin-conjugating enzyme family.

The protein resides in the nucleus. It carries out the reaction S-ubiquitinyl-[E1 ubiquitin-activating enzyme]-L-cysteine + [E2 ubiquitin-conjugating enzyme]-L-cysteine = [E1 ubiquitin-activating enzyme]-L-cysteine + S-ubiquitinyl-[E2 ubiquitin-conjugating enzyme]-L-cysteine.. It participates in protein modification; protein ubiquitination. Accepts ubiquitin from the E1 complex and catalyzes its covalent attachment to other proteins. Catalyzes monoubiquitination. Involved in DNA repair. The sequence is that of Ubiquitin-conjugating enzyme E2 T (ube2t) from Danio rerio (Zebrafish).